The chain runs to 150 residues: MPWSMKDYPASLKNLEKPVRKKAIDIANAMIDEGYEEGRAIPIATSKAKEWAENASTDEIDDFLTHDDETERDADPSSGSGPELMNKAEHVIKHKKGWAVKAEGAKRVSEIKDTKKEAIERAKEIAAHKGTEVIVHLADGSVQRKIKTGS.

The tract at residues 49 to 88 (KEWAENASTDEIDDFLTHDDETERDADPSSGSGPELMNKA) is disordered. A compositionally biased stretch (basic and acidic residues) spans 63–75 (FLTHDDETERDAD).

This is an uncharacterized protein from Bacillus subtilis (strain 168).